Reading from the N-terminus, the 323-residue chain is Mitochondrial glutamate carrier 1 (323 aa).

Solcar repeat units lie at residues Ile-6–Gln-93, Leu-101–Leu-214, and Ser-223–Glu-312. 6 consecutive transmembrane segments (helical) span residues Leu-12–Ala-32, Tyr-62–Ile-82, Met-107–Leu-127, Gly-189–Ala-209, Ser-223–Val-243, and Ala-292–Glu-312.

Belongs to the mitochondrial carrier (TC 2.A.29) family. In terms of tissue distribution, detected in insulin-secreting beta-cells and pancreatic islets (at the protein level).

The protein resides in the mitochondrion inner membrane. It catalyses the reaction L-glutamate(in) + H(+)(in) = L-glutamate(out) + H(+)(out). Mitochondrial glutamate/H(+) symporter. Responsible for the transport of glutamate from the cytosol into the mitochondrial matrix with the concomitant import of a proton. Plays a role in the control of glucose-stimulated insulin secretion. This chain is Mitochondrial glutamate carrier 1, found in Rattus norvegicus (Rat).